The following is a 326-amino-acid chain: Probable iron chelatin transport system permease protein HP_0889 (326 aa).

10 helical membrane passes run 7-27 (IALA…ESLS), 64-84 (ILAL…QTIF), 91-111 (PFLL…IAVV), 113-133 (SNIA…VLAM), 142-162 (LSLV…AGAI), 164-184 (FFVI…SLSL), 187-207 (YKDC…LFLL), 241-261 (VASA…LVIP), 275-295 (LLLS…VVAK), and 301-321 (DLPV…WLLF).

The protein belongs to the binding-protein-dependent transport system permease family. FecCD subfamily.

The protein localises to the cell inner membrane. Its function is as follows. Part of a binding-protein-dependent transport system for an iron chelatin; probably responsible for the translocation of the substrate across the membrane. The polypeptide is Probable iron chelatin transport system permease protein HP_0889 (Helicobacter pylori (strain ATCC 700392 / 26695) (Campylobacter pylori)).